Consider the following 419-residue polypeptide: Protein-lysine N-methyltransferase EFM2 (419 aa).

Residues tryptophan 222, 261-263, aspartate 290, tryptophan 318, and alanine 340 each bind S-adenosyl-L-methionine; that span reads GAG.

Belongs to the class I-like SAM-binding methyltransferase superfamily. METTL21 family.

Its subcellular location is the cytoplasm. In terms of biological role, S-adenosyl-L-methionine-dependent protein-lysine N-methyltransferase that mono- and dimethylates elongation factor 2 (EFT1/EFT2) at 'Lys-613' and methylates elongation factor 3A (YEF3). The chain is Protein-lysine N-methyltransferase EFM2 from Saccharomyces cerevisiae (strain ATCC 204508 / S288c) (Baker's yeast).